The following is a 516-amino-acid chain: uncharacterized protein (516 aa).

The first 22 residues, 1 to 22, serve as a signal peptide directing secretion; that stretch reads MLYRFWKTGLAIFMPGCILLSS. Residue C23 is the site of N-palmitoyl cysteine attachment. A lipid anchor (S-diacylglycerol cysteine) is attached at C23.

This sequence belongs to the MG067/MG068/MG395 family.

It is found in the cell membrane. This is an uncharacterized protein from Mycoplasma genitalium (strain ATCC 33530 / DSM 19775 / NCTC 10195 / G37) (Mycoplasmoides genitalium).